Here is a 396-residue protein sequence, read N- to C-terminus: MVEADRPGKLFIGGLNLETDEKSLEATFGKYGRISEVLLMKDRETNKSRGFAFITFESPADAKAAVRDMNGKSLDGKAIKVAQATKPAFESGRRGPPLSRSRGRSRGLRGARGGGPRRPPSRGGPADDGGYAGDFDLRPSRAPLPMKRGPPPPRRAGPPPKRAAPSGPARSGSGGGMRGRAPAARGRDGYEGPPRRDPPPPRRDPYLGSREGGYSPRDGYSSRDYSSARDARDFAPSPREYTYRDYGHSSARDECPSRGYGDRDGYGGRDRDYADHPSGGSYRDPFESYGDPRSAAPARGPPPSYGGGGGRYEEYRGCSPDAYGGGRDGYAGGRSERYSGGRDRVGRADRGLPQSVERGCPPPRESYSRSGRKVPRGGGRLGSRSERGGGGGRSRY.

M1 carries the N-acetylmethionine; in Heterogeneous nuclear ribonucleoprotein G; alternate modification. Position 2 is an N-acetylvaline; in Heterogeneous nuclear ribonucleoprotein G, N-terminally processed (V2). In terms of domain architecture, RRM spans 8–86 (GKLFIGGLNL…KAIKVAQATK (79 aa)). Residue K22 forms a Glycyl lysine isopeptide (Lys-Gly) (interchain with G-Cter in SUMO2) linkage. K30 carries the post-translational modification N6-acetyllysine. Glycyl lysine isopeptide (Lys-Gly) (interchain with G-Cter in SUMO2) cross-links involve residues K80 and K86. The interval 84 to 396 (ATKPAFESGR…RGGGGGRSRY (313 aa)) is disordered. S91 is subject to Phosphoserine. R122, R141, R162, and R170 each carry omega-N-methylarginine. Positions 148–162 (RGPPPPRRAGPPPKR) are enriched in pro residues. Composition is skewed to basic and acidic residues over residues 185–205 (RGRD…RRDP) and 241–275 (YTYR…DYAD). Residues 186 to 236 (GRDGYEGPPRRDPPPPRRDPYLGSREGGYSPRDGYSSRDYSSARDARDFAP) are necessary for the association to nascent RNAPII transcripts and nuclear localization. Gly residues predominate over residues 323–332 (YGGGRDGYAG). Residues 334–350 (RSERYSGGRDRVGRADR) show a composition bias toward basic and acidic residues. Phosphoserine occurs at positions 335 and 355. Residues 336–396 (ERYSGGRDRV…RGGGGGRSRY (61 aa)) are necessary for RNA-binding.

As to quaternary structure, homomultimer. Found in the supraspliceosome complex. Identified in the spliceosome C complex. Forms a complex with ILF2, ILF3, YLPM1, KHDRBS1, NCOA5 and PPP1CA. Interacts with CLK2, KHDRBS2, KHDRBS3, SAFB/SAFB1, TRA2B and YTHDC1. Interacts with ERAP1; the interaction is RNA-independent. In terms of processing, O-glycosylated. Arg-185 is dimethylated, probably to asymmetric dimethylarginine.

It is found in the nucleus. Functionally, RNA-binding protein that plays several role in the regulation of pre- and post-transcriptional processes. Implicated in tissue-specific regulation of gene transcription and alternative splicing of several pre-mRNAs. Binds to and stimulates transcription from the tumor suppressor TXNIP gene promoter; may thus be involved in tumor suppression. When associated with SAFB, binds to and stimulates transcription from the SREBF1 promoter. Associates with nascent mRNAs transcribed by RNA polymerase II. Component of the supraspliceosome complex that regulates pre-mRNA alternative splice site selection. Can either activate or suppress exon inclusion; acts additively with TRA2B to promote exon 7 inclusion of the survival motor neuron SMN2. Represses the splicing of MAPT/Tau exon 10. Binds preferentially to single-stranded 5'-CC[A/C]-rich RNA sequence motifs localized in a single-stranded conformation; probably binds RNA as a homodimer. Binds non-specifically to pre-mRNAs. Also plays a role in the cytoplasmic TNFR1 trafficking pathways; promotes both the IL-1-beta-mediated inducible proteolytic cleavage of TNFR1 ectodomains and the release of TNFR1 exosome-like vesicles to the extracellular compartment. In Bos taurus (Bovine), this protein is RNA-binding motif protein, X chromosome (RBMX).